The chain runs to 252 residues: Large ribosomal subunit protein uL4 (252 aa).

The protein belongs to the universal ribosomal protein uL4 family. In terms of assembly, part of the 50S ribosomal subunit.

Functionally, one of the primary rRNA binding proteins, this protein initially binds near the 5'-end of the 23S rRNA. It is important during the early stages of 50S assembly. It makes multiple contacts with different domains of the 23S rRNA in the assembled 50S subunit and ribosome. Its function is as follows. Forms part of the polypeptide exit tunnel. This is Large ribosomal subunit protein uL4 from Methanococcus vannielii (strain ATCC 35089 / DSM 1224 / JCM 13029 / OCM 148 / SB).